A 348-amino-acid chain; its full sequence is Nuclear receptor subfamily 1 group I member 3 (348 aa).

Positions 8 to 83 (PRSCMVCGDR…AGMKKEMILS (76 aa)) form a DNA-binding region, nuclear receptor. The NR C4-type zinc-finger motif lies at 11 to 31 (CMVCGDRATGYHFHALTCEGC). Thr-38 is modified (phosphothreonine; by PKC). Residues 47 to 71 (CPFAGSCKVNKAQRRHCPACRLQKC) form an NR C4-type zinc finger. The region spanning 109–348 (GQQELVQTLL…MMPLLQEICS (240 aa)) is the NR LBD domain.

Belongs to the nuclear hormone receptor family. NR1 subfamily. In terms of assembly, heterodimer of NR1I3 and RXR. Interacts with PSMC4. Interacts with ECT2. Directly interacts with DNAJC7; this complex may also include HSP90. Interacts with CRY1. Interacts with CRY2 in a ligand-dependent manner. In terms of processing, phosphorylated at Thr-38 by PKC, dephosphorylation of Thr-38 is required for nuclear translocation and activation.

The protein resides in the nucleus. It localises to the cytoplasm. It is found in the cytoskeleton. In terms of biological role, binds and transactivates the retinoic acid response elements that control expression of the retinoic acid receptor beta 2 and alcohol dehydrogenase 3 genes. Transactivates both the phenobarbital responsive element module of the human CYP2B6 gene and the CYP3A4 xenobiotic response element. This Pusa sibirica (Baikal seal) protein is Nuclear receptor subfamily 1 group I member 3 (NR1I3).